We begin with the raw amino-acid sequence, 767 residues long: Photosystem I P700 chlorophyll a apoprotein A1 (767 aa).

The segment at 1–22 is disordered; it reads MTISPPESGEKNKKVLEDPVKA. The segment covering 8-22 has biased composition (basic and acidic residues); sequence SGEKNKKVLEDPVKA. The next 8 membrane-spanning stretches (helical) occupy residues 76-99, 162-185, 201-225, 309-327, 368-391, 407-433, 455-477, and 558-576; these read IFSAHFGHLAVIFIWMSAAFFHGA, LMALAIGAVVMAALMLHAGIFHYH, LNHHIAGLVGLGSLAWAGHCIHIGA, VSHHHLAFGVIAIIGGHMY, RHAQLAVNLAMLGSISILVSHHMY, LGLFTHHMWIGGLFIVGAGAHAGIAMV, ALISHLNWVCMWLGFHSFGLYIH, and LMIHHIHAFQIHVTVLILL. Cysteine 600 and cysteine 609 together coordinate [4Fe-4S] cluster. The next 2 helical transmembrane spans lie at 616 to 637 and 681 to 703; these read HVFLALFWMYNCLSIVIFHFSW and ISMYGLMFLGAHFIWAFSLMFLF. Histidine 692 provides a ligand contact to divinylchlorophyll a'. Residues methionine 700 and tyrosine 708 each contribute to the divinyl chlorophyll a site. Tryptophan 709 lines the phylloquinone pocket. A helical transmembrane segment spans residues 741–761; sequence AVGVTHFLVGGIATTWAFFHA.

It belongs to the PsaA/PsaB family. In terms of assembly, the PsaA/B heterodimer binds the P700 divinyl chlorophyll special pair and subsequent electron acceptors. PSI consists of a core antenna complex that captures photons, and an electron transfer chain that converts photonic excitation into a charge separation. The cyanobacterial PSI reaction center is composed of one copy each of PsaA,B,C,D,E,F,I,J,K,L,M and X, and forms trimeric complexes. It depends on PSI electron transfer chain: 5 divinyl chlorophyll a, 1 divinyl chlorophyll a', 2 phylloquinones and 3 4Fe-4S clusters. PSI core antenna: 90 divinyl chlorophyll a, 22 carotenoids, 3 phospholipids and 1 galactolipid. P700 is a divinyl chlorophyll a/divinyl chlorophyll a' dimer, A0 is one or more divinyl chlorophyll a, A1 is one or both phylloquinones and FX is a shared 4Fe-4S iron-sulfur center. as a cofactor.

Its subcellular location is the cellular thylakoid membrane. It carries out the reaction reduced [plastocyanin] + hnu + oxidized [2Fe-2S]-[ferredoxin] = oxidized [plastocyanin] + reduced [2Fe-2S]-[ferredoxin]. Its function is as follows. PsaA and PsaB bind P700, the primary electron donor of photosystem I (PSI), as well as the electron acceptors A0, A1 and FX. PSI is a plastocyanin/cytochrome c6-ferredoxin oxidoreductase, converting photonic excitation into a charge separation, which transfers an electron from the donor P700 chlorophyll pair to the spectroscopically characterized acceptors A0, A1, FX, FA and FB in turn. Oxidized P700 is reduced on the lumenal side of the thylakoid membrane by plastocyanin or cytochrome c6. This chain is Photosystem I P700 chlorophyll a apoprotein A1, found in Prochlorococcus marinus (strain MIT 9301).